The sequence spans 727 residues: Engulfment and cell motility protein 1 (727 aa).

The residue at position 18 (Tyr-18) is a Phosphotyrosine; by HCK. N6-acetyllysine occurs at positions 100 and 105. Tyr-216 carries the phosphotyrosine; by HCK modification. Residues 319-492 enclose the ELMO domain; sequence AQRDIIFELR…VVKEQVMRAL (174 aa). Ser-344 carries the phosphoserine modification. Phosphotyrosine; by HCK occurs at positions 395 and 511. A PH domain is found at 555-676; it reads RLVEGTCFRK…DGLNALLGKD (122 aa). Positions 707 to 714 match the SH3-binding motif; the sequence is PDAPPPIP. Tyr-720 carries the phosphotyrosine; by HCK modification.

As to quaternary structure, interacts directly with the SH3-domain of DOCK1 via its SH3-binding site. Probably forms a heterotrimeric complex with DOCK1 and RAC1. Interacts with PLEKHG6. Interacts with HCK (via SH3 domain). Interacts with ADGRB1. Interacts with ADGRB3. Interacts with DOCK5. Post-translationally, phosphorylated by HCK.

It is found in the cytoplasm. The protein localises to the cell membrane. Its function is as follows. Involved in cytoskeletal rearrangements required for phagocytosis of apoptotic cells and cell motility. Acts in association with DOCK1 and CRK. Was initially proposed to be required in complex with DOCK1 to activate Rac Rho small GTPases. May enhance the guanine nucleotide exchange factor (GEF) activity of DOCK1. In Mus musculus (Mouse), this protein is Engulfment and cell motility protein 1 (Elmo1).